Consider the following 186-residue polypeptide: MVNMNILTTVALAGLAAAKTVEVVVAENGGLTFTPNQIKADVNDIVHFKLAKSGHDISSGPFDMPCKPSDNSLYSGKLNEGDEFSVNITNTDPIWLYCSVSKHCSKGMVAVINPPSSGNTIEAYKQAAAGAGNGQAPSRVNNGSSGSGTPTSGGAPAATSPNAASSLTFSGAAALVAMGGAWIGLL.

The N-terminal stretch at 1 to 18 is a signal peptide; it reads MVNMNILTTVALAGLAAA. H55 provides a ligand contact to Cu cation. C66 and C104 are oxidised to a cystine. A glycan (N-linked (GlcNAc...) asparagine) is linked at N87. Residues C98 and H103 each contribute to the Cu cation site. Residues 130–160 form a disordered region; the sequence is GAGNGQAPSRVNNGSSGSGTPTSGGAPAATS. The N-linked (GlcNAc...) asparagine glycan is linked to N142. The span at 143-160 shows a compositional bias: low complexity; it reads GSSGSGTPTSGGAPAATS. G153 carries GPI-anchor amidated glycine lipidation. Positions 154 to 186 are cleaved as a propeptide — removed in mature form; it reads GAPAATSPNAASSLTFSGAAALVAMGGAWIGLL.

Belongs to the multicopper oxidase family. Requires Cu cation as cofactor.

Its subcellular location is the cell membrane. It localises to the secreted. Functionally, probable electron transfer copper protein that serves as a direct electron donor. This Arthroderma benhamiae (strain ATCC MYA-4681 / CBS 112371) (Trichophyton mentagrophytes) protein is Probable GPI-anchored cupredoxin ARB_05732-1.